Consider the following 421-residue polypeptide: UDP-N-acetylglucosamine 1-carboxyvinyltransferase (421 aa).

22 to 23 (KN) contacts phosphoenolpyruvate. Residue Arg93 participates in UDP-N-acetyl-alpha-D-glucosamine binding. Cys117 (proton donor) is an active-site residue. The residue at position 117 (Cys117) is a 2-(S-cysteinyl)pyruvic acid O-phosphothioketal. Residues 122–126 (RPVDL), Asp308, and Leu330 contribute to the UDP-N-acetyl-alpha-D-glucosamine site.

It belongs to the EPSP synthase family. MurA subfamily.

It is found in the cytoplasm. The enzyme catalyses phosphoenolpyruvate + UDP-N-acetyl-alpha-D-glucosamine = UDP-N-acetyl-3-O-(1-carboxyvinyl)-alpha-D-glucosamine + phosphate. Its pathway is cell wall biogenesis; peptidoglycan biosynthesis. Its function is as follows. Cell wall formation. Adds enolpyruvyl to UDP-N-acetylglucosamine. In Wolinella succinogenes (strain ATCC 29543 / DSM 1740 / CCUG 13145 / JCM 31913 / LMG 7466 / NCTC 11488 / FDC 602W) (Vibrio succinogenes), this protein is UDP-N-acetylglucosamine 1-carboxyvinyltransferase.